The chain runs to 160 residues: Large ribosomal subunit protein eL21 (160 aa).

This sequence belongs to the eukaryotic ribosomal protein eL21 family.

This chain is Large ribosomal subunit protein eL21 (rpl21), found in Dictyostelium discoideum (Social amoeba).